A 122-amino-acid polypeptide reads, in one-letter code: Large ribosomal subunit protein bL12 (122 aa).

It belongs to the bacterial ribosomal protein bL12 family. In terms of assembly, homodimer. Part of the ribosomal stalk of the 50S ribosomal subunit. Forms a multimeric L10(L12)X complex, where L10 forms an elongated spine to which 2 to 4 L12 dimers bind in a sequential fashion. Binds GTP-bound translation factors.

In terms of biological role, forms part of the ribosomal stalk which helps the ribosome interact with GTP-bound translation factors. Is thus essential for accurate translation. The chain is Large ribosomal subunit protein bL12 from Neisseria lactamica.